Here is a 392-residue protein sequence, read N- to C-terminus: Bone morphogenetic protein 15 (392 aa).

Positions 1-18 are cleaved as a signal peptide; the sequence is MVLLSILRILFLCELVLF. The propeptide occupies 19–267; it reads MEHRAQMAEG…ERESLLRRTR (249 aa). Residues asparagine 87, asparagine 147, and asparagine 237 are each glycosylated (N-linked (GlcNAc...) asparagine). Glutamine 268 carries the pyrrolidone carboxylic acid; in P16 and P17 modification. At serine 273 the chain carries Phosphoserine; in P16. Threonine 277 carries O-linked (HexNAc...) threonine; in P17 glycosylation. Intrachain disulfides connect cysteine 291-cysteine 357, cysteine 320-cysteine 389, and cysteine 324-cysteine 391. Asparagine 373 carries N-linked (GlcNAc...) asparagine glycosylation.

It belongs to the TGF-beta family. Homodimer. But, in contrast to other members of this family, cannot be disulfide-linked.

It localises to the secreted. In terms of biological role, may be involved in follicular development. Oocyte-specific growth/differentiation factor that stimulates folliculogenesis and granulosa cell (GC) growth. This chain is Bone morphogenetic protein 15 (BMP15), found in Homo sapiens (Human).